Reading from the N-terminus, the 227-residue chain is Cytidylate kinase (227 aa).

Residue 12–20 (GPGGAGKGT) participates in ATP binding.

It belongs to the cytidylate kinase family. Type 1 subfamily.

Its subcellular location is the cytoplasm. The catalysed reaction is CMP + ATP = CDP + ADP. It catalyses the reaction dCMP + ATP = dCDP + ADP. This Klebsiella pneumoniae (strain 342) protein is Cytidylate kinase.